We begin with the raw amino-acid sequence, 156 residues long: Transcription elongation factor GreA (156 aa).

Residues 12 to 72 (YKKLEDELST…KEIEHELKYA (61 aa)) are a coiled coil.

Belongs to the GreA/GreB family.

Its function is as follows. Necessary for efficient RNA polymerase transcription elongation past template-encoded arresting sites. The arresting sites in DNA have the property of trapping a certain fraction of elongating RNA polymerases that pass through, resulting in locked ternary complexes. Cleavage of the nascent transcript by cleavage factors such as GreA or GreB allows the resumption of elongation from the new 3'terminus. GreA releases sequences of 2 to 3 nucleotides. In Dehalococcoides mccartyi (strain ATCC BAA-2266 / KCTC 15142 / 195) (Dehalococcoides ethenogenes (strain 195)), this protein is Transcription elongation factor GreA.